A 286-amino-acid chain; its full sequence is ATP synthase gamma chain (286 aa).

It belongs to the ATPase gamma chain family. As to quaternary structure, F-type ATPases have 2 components, CF(1) - the catalytic core - and CF(0) - the membrane proton channel. CF(1) has five subunits: alpha(3), beta(3), gamma(1), delta(1), epsilon(1). CF(0) has three main subunits: a, b and c.

It is found in the cell inner membrane. Functionally, produces ATP from ADP in the presence of a proton gradient across the membrane. The gamma chain is believed to be important in regulating ATPase activity and the flow of protons through the CF(0) complex. The chain is ATP synthase gamma chain from Shewanella putrefaciens (strain CN-32 / ATCC BAA-453).